A 315-amino-acid chain; its full sequence is tRNA-cytidine(32) 2-sulfurtransferase (315 aa).

The short motif at 54–59 (SGGKDS) is the PP-loop motif element. Residues cysteine 129, cysteine 132, and cysteine 220 each contribute to the [4Fe-4S] cluster site.

Belongs to the TtcA family. In terms of assembly, homodimer. The cofactor is Mg(2+). [4Fe-4S] cluster is required as a cofactor.

The protein localises to the cytoplasm. The catalysed reaction is cytidine(32) in tRNA + S-sulfanyl-L-cysteinyl-[cysteine desulfurase] + AH2 + ATP = 2-thiocytidine(32) in tRNA + L-cysteinyl-[cysteine desulfurase] + A + AMP + diphosphate + H(+). It participates in tRNA modification. Catalyzes the ATP-dependent 2-thiolation of cytidine in position 32 of tRNA, to form 2-thiocytidine (s(2)C32). The sulfur atoms are provided by the cysteine/cysteine desulfurase (IscS) system. This chain is tRNA-cytidine(32) 2-sulfurtransferase, found in Bordetella avium (strain 197N).